The sequence spans 432 residues: ATP-dependent RNA helicase RhlB (432 aa).

A Q motif motif is present at residues 9–37; it reads QRFADLPLHAEVIQALNENGFEFCTPIQA. One can recognise a Helicase ATP-binding domain in the interval 40–219; that stretch reads LPVLLKAKDI…YDHMNDPEKV (180 aa). 53–60 provides a ligand contact to ATP; it reads AQTGTGKT. The DEAD box motif lies at 165 to 168; sequence DEAD. The region spanning 243–390 is the Helicase C-terminal domain; the sequence is KMRLLLTLME…VSRYDREALL (148 aa). A disordered region spans residues 395–432; sequence TPVKIHRKHPTSRTRDGAKGAHRSGGARPPRHRTRRPS. Residues 423–432 are compositionally biased toward basic residues; it reads PPRHRTRRPS.

Belongs to the DEAD box helicase family. RhlB subfamily. In terms of assembly, component of the RNA degradosome, which is a multiprotein complex involved in RNA processing and mRNA degradation.

The protein localises to the cytoplasm. It catalyses the reaction ATP + H2O = ADP + phosphate + H(+). In terms of biological role, DEAD-box RNA helicase involved in RNA degradation. Has RNA-dependent ATPase activity and unwinds double-stranded RNA. The chain is ATP-dependent RNA helicase RhlB from Shewanella denitrificans (strain OS217 / ATCC BAA-1090 / DSM 15013).